Reading from the N-terminus, the 182-residue chain is Orotate phosphoribosyltransferase (182 aa).

Residues Arg96, Lys97, Lys100, His102, and 122 to 130 (EDTSTTGGS) each bind 5-phospho-alpha-D-ribose 1-diphosphate. Orotate is bound by residues Thr126 and Arg154.

It belongs to the purine/pyrimidine phosphoribosyltransferase family. PyrE subfamily. Homodimer. Mg(2+) serves as cofactor.

The enzyme catalyses orotidine 5'-phosphate + diphosphate = orotate + 5-phospho-alpha-D-ribose 1-diphosphate. Its pathway is pyrimidine metabolism; UMP biosynthesis via de novo pathway; UMP from orotate: step 1/2. Functionally, catalyzes the transfer of a ribosyl phosphate group from 5-phosphoribose 1-diphosphate to orotate, leading to the formation of orotidine monophosphate (OMP). This is Orotate phosphoribosyltransferase from Streptomyces avermitilis (strain ATCC 31267 / DSM 46492 / JCM 5070 / NBRC 14893 / NCIMB 12804 / NRRL 8165 / MA-4680).